The sequence spans 506 residues: Maturase K (506 aa).

It belongs to the intron maturase 2 family. MatK subfamily.

The protein resides in the plastid. Its subcellular location is the chloroplast. Functionally, usually encoded in the trnK tRNA gene intron. Probably assists in splicing its own and other chloroplast group II introns. The polypeptide is Maturase K (Rhododendron tsusiophyllum (Rhododendron)).